The primary structure comprises 423 residues: Dihydroorotase-like protein (423 aa).

The protein belongs to the metallo-dependent hydrolases superfamily. DHOase family. PyrC' subfamily. As to quaternary structure, heterododecamer of 6 active PyrB subunits and 6 non-catalytic PyrC' subunits.

Non-functional DHOase. The chain is Dihydroorotase-like protein (pyrC') from Pseudomonas aeruginosa (strain ATCC 15692 / DSM 22644 / CIP 104116 / JCM 14847 / LMG 12228 / 1C / PRS 101 / PAO1).